Reading from the N-terminus, the 222-residue chain is Small ribosomal subunit protein uS3 (222 aa).

The region spanning 38-106 is the KH type-2 domain; that stretch reads IRKFISEKLA…NVHINIVEIK (69 aa).

This sequence belongs to the universal ribosomal protein uS3 family. Part of the 30S ribosomal subunit. Forms a tight complex with proteins S10 and S14.

Functionally, binds the lower part of the 30S subunit head. Binds mRNA in the 70S ribosome, positioning it for translation. The sequence is that of Small ribosomal subunit protein uS3 from Lactobacillus johnsonii (strain CNCM I-12250 / La1 / NCC 533).